Consider the following 78-residue polypeptide: RNA-binding protein Hfq (78 aa).

One can recognise a Sm domain in the interval 10-69; the sequence is DPFLNTLRKEHVPVSIYLVNGIKLQGQIESFDQYVVLLRNTVTQMVYKHAISTVVPARAV.

It belongs to the Hfq family. As to quaternary structure, homohexamer.

Its function is as follows. RNA chaperone that binds small regulatory RNA (sRNAs) and mRNAs to facilitate mRNA translational regulation in response to envelope stress, environmental stress and changes in metabolite concentrations. Also binds with high specificity to tRNAs. The sequence is that of RNA-binding protein Hfq from Bordetella bronchiseptica (strain ATCC BAA-588 / NCTC 13252 / RB50) (Alcaligenes bronchisepticus).